A 174-amino-acid polypeptide reads, in one-letter code: Heat shock protein 22 (174 aa).

Residues 44–154 enclose the sHSP domain; sequence QIARWQEQEF…TLKEREVTIE (111 aa). At threonine 152 the chain carries Phosphothreonine. The segment at 152–174 is disordered; sequence TIEQTGEPAKKSAEEPNDKAASQ. A compositionally biased stretch (basic and acidic residues) spans 159 to 174; it reads PAKKSAEEPNDKAASQ.

It belongs to the small heat shock protein (HSP20) family.

The polypeptide is Heat shock protein 22 (Hsp22) (Drosophila melanogaster (Fruit fly)).